A 256-amino-acid polypeptide reads, in one-letter code: Calsenilin (256 aa).

Residues Met1–Ile22 form a disordered region. Lys26 participates in a covalent cross-link: Glycyl lysine isopeptide (Lys-Gly) (interchain with G-Cter in SUMO1). Residues Cys45 and Cys46 are each lipidated (S-palmitoyl cysteine). Phosphoserine occurs at positions 60 and 63. The EF-hand 1; degenerate domain maps to Leu67–Pro123. Residue Lys90 forms a Glycyl lysine isopeptide (Lys-Gly) (interchain with G-Cter in SUMO1) linkage. EF-hand domains lie at Asp126–Gly161, Thr162–Met197, and Ala210–Ile245. Ca(2+) contacts are provided by Asp175, Asn177, Asp179, Cys181, Glu186, Asp223, Asn225, Asp227, and Glu234. The segment at Glu243–Ile256 is interaction with KCND2.

The protein belongs to the recoverin family. In terms of assembly, binds to DNA as a homomultimer. Dimerization is induced by binding to calcium. Interacts with the C-terminus of PSEN1 and PSEN2 and with PSEN2 CTF subunit. Associates with KCN1. Component of heteromultimeric potassium channels. Identified in potassium channel complexes containing KCND1, KCND2, KCND3, KCNIP1, KCNIP2, KCNIP3, KCNIP4, DPP6 and DPP10. Interacts with KCND2 and KCND3. Palmitoylated. Palmitoylation enhances association with the plasma membrane. Post-translationally, proteolytically cleaved by caspase-3. As to expression, highly expressed in brain. Isoform 1 or isoform 4 (T+ forms) are expressed at equal levels with isoform 2 or isoform 3 (T- forms). Primarily detected in the layer V and deep layer VI of the cerebral cortex, the hippocampus, and the entire cerebellum. Expressed at low levels in testis. Also expressed in heart.

The protein localises to the cytoplasm. It localises to the cell membrane. It is found in the endoplasmic reticulum. Its subcellular location is the golgi apparatus. The protein resides in the nucleus. Its function is as follows. Calcium-dependent transcriptional repressor that binds to the DRE element of genes including PDYN and FOS. Affinity for DNA is reduced upon binding to calcium and enhanced by binding to magnesium. Seems to be involved in nociception. In terms of biological role, regulatory subunit of Kv4/D (Shal)-type voltage-gated rapidly inactivating A-type potassium channels, such as KCND2/Kv4.2 and KCND3/Kv4.3. Modulates channel expression at the cell membrane, gating characteristics, inactivation kinetics and rate of recovery from inactivation in a calcium-dependent and isoform-specific manner. May play a role in the regulation of PSEN2 proteolytic processing and apoptosis. Together with PSEN2 involved in modulation of amyloid-beta formation. This is Calsenilin (Kcnip3) from Mus musculus (Mouse).